Here is a 174-residue protein sequence, read N- to C-terminus: Urease accessory protein UreE (174 aa).

The segment at 146-174 is disordered; it reads NGAYATGGHAHDHDGEPEHVHGPGCQHAH. Residues 154–166 show a composition bias toward basic and acidic residues; it reads HAHDHDGEPEHVH.

The protein belongs to the UreE family.

Its subcellular location is the cytoplasm. Involved in urease metallocenter assembly. Binds nickel. Probably functions as a nickel donor during metallocenter assembly. The polypeptide is Urease accessory protein UreE (Albidiferax ferrireducens (strain ATCC BAA-621 / DSM 15236 / T118) (Rhodoferax ferrireducens)).